We begin with the raw amino-acid sequence, 181 residues long: dTDP-4-dehydrorhamnose 3,5-epimerase (181 aa).

Substrate is bound by residues Arg-23, Glu-28, Gln-47 to Asn-49, and Arg-59. Catalysis depends on His-62, which acts as the Proton acceptor. Substrate is bound by residues Lys-71 and His-118. The active-site Proton donor is the Tyr-131. Glu-142 and Lys-167 together coordinate substrate.

It belongs to the dTDP-4-dehydrorhamnose 3,5-epimerase family. In terms of assembly, homodimer.

The enzyme catalyses dTDP-4-dehydro-6-deoxy-alpha-D-glucose = dTDP-4-dehydro-beta-L-rhamnose. The protein operates within carbohydrate biosynthesis; dTDP-L-rhamnose biosynthesis. It functions in the pathway bacterial outer membrane biogenesis; lipopolysaccharide biosynthesis. Functionally, catalyzes the epimerization of the C3' and C5'positions of dTDP-6-deoxy-D-xylo-4-hexulose, forming dTDP-6-deoxy-L-lyxo-4-hexulose. The protein is dTDP-4-dehydrorhamnose 3,5-epimerase (rmlC) of Pseudomonas aeruginosa (strain ATCC 15692 / DSM 22644 / CIP 104116 / JCM 14847 / LMG 12228 / 1C / PRS 101 / PAO1).